Here is an 800-residue protein sequence, read N- to C-terminus: Leukocyte receptor cluster member 8 homolog (800 aa).

Disordered regions lie at residues Asn118–Ser149, Pro175–Phe229, Ser245–Gln273, Thr335–Ser394, and Lys407–Gly519. 2 stretches are compositionally biased toward low complexity: residues Gln120 to Gly131 and Asn184 to Ser201. The segment covering Ser252–Thr261 has biased composition (polar residues). Basic and acidic residues predominate over residues Trp338 to Ser352. Positions Gln360–Ala387 are enriched in polar residues. Over residues Ser409–Arg418 the composition is skewed to low complexity. Basic residues-rich tracts occupy residues Ser419–Arg433 and Glu508–Gly519. A PCI domain is found at Asp636 to Ile800.

The protein is Leukocyte receptor cluster member 8 homolog (leng8) of Xenopus laevis (African clawed frog).